A 198-amino-acid chain; its full sequence is Glycerol-3-phosphate acyltransferase (198 aa).

A run of 4 helical transmembrane segments spans residues 4–24 (TYLLFIVAYLLGSIPFALVVG), 71–91 (LPMIFGLDIHPLWFGLAAVLG), 113–133 (LLCYSPVVFAILAVVFFTLLF), and 147–167 (VVAVIASIVSGDKIFIIAMCL).

The protein belongs to the PlsY family. In terms of assembly, probably interacts with PlsX.

Its subcellular location is the cell membrane. The catalysed reaction is an acyl phosphate + sn-glycerol 3-phosphate = a 1-acyl-sn-glycero-3-phosphate + phosphate. It functions in the pathway lipid metabolism; phospholipid metabolism. In terms of biological role, catalyzes the transfer of an acyl group from acyl-phosphate (acyl-PO(4)) to glycerol-3-phosphate (G3P) to form lysophosphatidic acid (LPA). This enzyme utilizes acyl-phosphate as fatty acyl donor, but not acyl-CoA or acyl-ACP. The sequence is that of Glycerol-3-phosphate acyltransferase from Bacillus cereus (strain G9842).